The following is a 212-amino-acid chain: Ribosomal RNA large subunit methyltransferase E (212 aa).

Gly56, Trp58, Asp78, Asp94, and Asp117 together coordinate S-adenosyl-L-methionine. The active-site Proton acceptor is the Lys157.

The protein belongs to the class I-like SAM-binding methyltransferase superfamily. RNA methyltransferase RlmE family.

It localises to the cytoplasm. The catalysed reaction is uridine(2552) in 23S rRNA + S-adenosyl-L-methionine = 2'-O-methyluridine(2552) in 23S rRNA + S-adenosyl-L-homocysteine + H(+). Its function is as follows. Specifically methylates the uridine in position 2552 of 23S rRNA at the 2'-O position of the ribose in the fully assembled 50S ribosomal subunit. This is Ribosomal RNA large subunit methyltransferase E from Ehrlichia chaffeensis (strain ATCC CRL-10679 / Arkansas).